Here is a 514-residue protein sequence, read N- to C-terminus: Cytidine and dCMP deaminase domain-containing protein 1 (514 aa).

Polar residues-rich tracts occupy residues 1 to 11 (MKEAGQMQNLE) and 18 to 27 (SVSTQTGSMT). Disordered stretches follow at residues 1–27 (MKEA…GSMT) and 55–83 (RQKS…TDKR). Over residues 59–83 (QKNEEGKHGPLGDNEERTRVSTDKR) the composition is skewed to basic and acidic residues. One can recognise a CMP/dCMP-type deaminase 1 domain in the interval 70-168 (GDNEERTRVS…SLLTEASSSE (99 aa)). Zn(2+) is bound by residues His-109, Cys-134, and Cys-137. Positions 271–283 (NLRQNMKDLILLL) match the Nuclear export signal motif. One can recognise a CMP/dCMP-type deaminase 2 domain in the interval 317-482 (EIARHCMVQA…LNPSGAYGLE (166 aa)). His-398 provides a ligand contact to Zn(2+). Glu-400 functions as the Proton donor in the catalytic mechanism. Zn(2+) is bound by residues Cys-426 and Cys-429. Residues 480–514 (GLEQNEPERRENGVLRPVPQKEEQHQDKKLRLGIH) are disordered. Residues 485–514 (EPERRENGVLRPVPQKEEQHQDKKLRLGIH) are compositionally biased toward basic and acidic residues. The short motif at 488 to 510 (RRENGVLRPVPQKEEQHQDKKLR) is the Bipartite nuclear localization signal element.

This sequence belongs to the cytidine and deoxycytidylate deaminase family. Requires Zn(2+) as cofactor. Widely expressed. Expressed at high levels in the testis.

Its subcellular location is the cytoplasm. The protein resides in the nucleus. The catalysed reaction is 2'-deoxycytidine + H2O + H(+) = 2'-deoxyuridine + NH4(+). It catalyses the reaction cytidine + H2O + H(+) = uridine + NH4(+). Functionally, catalyzes the deamination of cytidine and deoxycytidine into uridine and deoxyuridine, respectively. May play an important role in testicular development and spermatogenesis. The polypeptide is Cytidine and dCMP deaminase domain-containing protein 1 (CDADC1) (Homo sapiens (Human)).